A 406-amino-acid polypeptide reads, in one-letter code: Protein PHYTOCHROME KINASE SUBSTRATE 4 (406 aa).

The segment covering 106–119 (SWNSQTGLLSNKNR) has biased composition (polar residues). Residues 106–133 (SWNSQTGLLSNKNRQGSDRDGRRSSKKG) are disordered.

It belongs to the PKS family. Interacts in vitro with PHYA and PHYB. Expressed in the hypocotyl elongation zone. Not found in the root elongation zone.

Functionally, modulates phytochrome-mediated control of hypocotyl growth orientation. Involved in PHYA and PHYB signaling. Acts as an inhibitor of asymmetric growth. Not involved in the control of leaf flattening. The polypeptide is Protein PHYTOCHROME KINASE SUBSTRATE 4 (PKS4) (Arabidopsis thaliana (Mouse-ear cress)).